A 361-amino-acid polypeptide reads, in one-letter code: G2/mitotic-specific cyclin-B1 (361 aa).

Polar residues predominate over residues 1–13; sequence MLRATNNRRTSNN. A disordered region spans residues 1–33; that stretch reads MLRATNNRRTSNNVEKDSLQMAKHGNGPLKPVN.

This sequence belongs to the cyclin family. Cyclin AB subfamily. As to quaternary structure, interacts with the CDK1 protein kinase to form a serine/threonine kinase holoenzyme complex also known as maturation promoting factor (MPF). The cyclin subunit imparts substrate specificity to the complex. Interacts with E3 ubiquitin-protein ligase etc-1. In terms of processing, ubiquitinated by etc-1 likely during meiosis, resulting in its degradation.

It localises to the cytoplasm. Functionally, essential for the control of the cell cycle at the G2/M (mitosis) transition. In Caenorhabditis elegans, this protein is G2/mitotic-specific cyclin-B1 (cyb-1).